Here is a 464-residue protein sequence, read N- to C-terminus: Bifunctional protein GlmU (464 aa).

The segment at 1–231 (MDVVIMAAGK…ATQVAGVNSP (231 aa)) is pyrophosphorylase. UDP-N-acetyl-alpha-D-glucosamine-binding positions include Lys20, Gln78, 83 to 84 (GT), 105 to 107 (SGD), Gly142, Glu156, and Asn229. Asp107 lines the Mg(2+) pocket. Asn229 contacts Mg(2+). A linker region spans residues 232 to 252 (VQLAALERAFQSKVALQLMEQ). Positions 253-464 (GVRLADPARL…SIANWKRPSK (212 aa)) are N-acetyltransferase. The UDP-N-acetyl-alpha-D-glucosamine site is built by Arg343 and Lys361. His373 acts as the Proton acceptor in catalysis. 2 residues coordinate UDP-N-acetyl-alpha-D-glucosamine: Tyr376 and Asn387. Acetyl-CoA-binding positions include Ala390, 396 to 397 (NY), Ser415, Gly433, and Arg450.

This sequence in the N-terminal section; belongs to the N-acetylglucosamine-1-phosphate uridyltransferase family. The protein in the C-terminal section; belongs to the transferase hexapeptide repeat family. Homotrimer. Mg(2+) serves as cofactor.

The protein resides in the cytoplasm. It carries out the reaction alpha-D-glucosamine 1-phosphate + acetyl-CoA = N-acetyl-alpha-D-glucosamine 1-phosphate + CoA + H(+). The enzyme catalyses N-acetyl-alpha-D-glucosamine 1-phosphate + UTP + H(+) = UDP-N-acetyl-alpha-D-glucosamine + diphosphate. Its pathway is nucleotide-sugar biosynthesis; UDP-N-acetyl-alpha-D-glucosamine biosynthesis; N-acetyl-alpha-D-glucosamine 1-phosphate from alpha-D-glucosamine 6-phosphate (route II): step 2/2. The protein operates within nucleotide-sugar biosynthesis; UDP-N-acetyl-alpha-D-glucosamine biosynthesis; UDP-N-acetyl-alpha-D-glucosamine from N-acetyl-alpha-D-glucosamine 1-phosphate: step 1/1. It functions in the pathway bacterial outer membrane biogenesis; LPS lipid A biosynthesis. In terms of biological role, catalyzes the last two sequential reactions in the de novo biosynthetic pathway for UDP-N-acetylglucosamine (UDP-GlcNAc). The C-terminal domain catalyzes the transfer of acetyl group from acetyl coenzyme A to glucosamine-1-phosphate (GlcN-1-P) to produce N-acetylglucosamine-1-phosphate (GlcNAc-1-P), which is converted into UDP-GlcNAc by the transfer of uridine 5-monophosphate (from uridine 5-triphosphate), a reaction catalyzed by the N-terminal domain. The sequence is that of Bifunctional protein GlmU from Albidiferax ferrireducens (strain ATCC BAA-621 / DSM 15236 / T118) (Rhodoferax ferrireducens).